We begin with the raw amino-acid sequence, 453 residues long: UDP-N-acetylmuramoylalanine--D-glutamate ligase (453 aa).

Residue 115–121 (GTNGKTT) participates in ATP binding.

It belongs to the MurCDEF family.

It localises to the cytoplasm. It catalyses the reaction UDP-N-acetyl-alpha-D-muramoyl-L-alanine + D-glutamate + ATP = UDP-N-acetyl-alpha-D-muramoyl-L-alanyl-D-glutamate + ADP + phosphate + H(+). Its pathway is cell wall biogenesis; peptidoglycan biosynthesis. In terms of biological role, cell wall formation. Catalyzes the addition of glutamate to the nucleotide precursor UDP-N-acetylmuramoyl-L-alanine (UMA). This Geotalea daltonii (strain DSM 22248 / JCM 15807 / FRC-32) (Geobacter daltonii) protein is UDP-N-acetylmuramoylalanine--D-glutamate ligase.